The chain runs to 148 residues: Endothelial differentiation-related factor 1 (148 aa).

N-acetylalanine is present on Ala2. Ser4 is modified (phosphoserine). Residue Lys25 is modified to N6-methyllysine. Residues Arg33–Lys42 are compositionally biased toward basic and acidic residues. The tract at residues Arg33 to Glu66 is disordered. The tract at residues Asp37–Arg113 is interaction with NR5A2, PPARG and NR1H3. The span at Gln48–Thr58 shows a compositional bias: polar residues. Positions His69–Asp108 are interaction with TBP and NR5A1. The short motif at Ile81–Lys88 is the IQ motif element. The 55-residue stretch at Ile81–Lys135 folds into the HTH cro/C1-type domain. A DNA-binding region (H-T-H motif) is located at residues Gln92–Ser111.

In terms of assembly, interacts with TBP and the transcription factor IID (TFIID) complex, NR5A2, NR1H3 and PPARG. Interaction with TBP is regulated by phosphorylation. Binds NR5A1, ATF1, FOS and JUN via their conserved basic region. Binding to calmodulin is regulated by calcium and phosphorylation of the IQ motif. In terms of processing, phosphorylated (by PKA and PKC). In terms of tissue distribution, expressed in brain, liver, lung, kidney and heart (at protein level). Ubiquitously expressed. More abundant in heart, pancreas, liver, intestine and adipose tissues.

It is found in the cytoplasm. The protein resides in the nucleus. Transcriptional coactivator stimulating NR5A1 and ligand-dependent NR1H3/LXRA and PPARG transcriptional activities. Enhances the DNA-binding activity of ATF1, ATF2, CREB1 and NR5A1. Regulates nitric oxid synthase activity probably by sequestering calmodulin in the cytoplasm. May function in endothelial cells differentiation, hormone-induced cardiomyocytes hypertrophy and lipid metabolism. In Homo sapiens (Human), this protein is Endothelial differentiation-related factor 1 (EDF1).